The chain runs to 931 residues: Semaphorin-6C (931 aa).

Positions 1–25 are cleaved as a signal peptide; sequence MPRAPHSMPLLLLLLLLSSLPQAQA. Residues 26-605 lie on the Extracellular side of the membrane; that stretch reads AFPQDPTPLL…ASASRSIPIP (580 aa). The Sema domain maps to 31–517; it reads PTPLLTSDLQ…FPGCIVYLSL (487 aa). Asn-71 is a glycosylation site (N-linked (GlcNAc...) asparagine). 4 disulfide bridges follow: Cys-112-Cys-122, Cys-140-Cys-149, Cys-263-Cys-374, and Cys-288-Cys-333. The N-linked (GlcNAc...) asparagine glycan is linked to Asn-287. Asn-438 carries an N-linked (GlcNAc...) asparagine glycan. Cystine bridges form between Cys-480–Cys-511, Cys-520–Cys-538, Cys-526–Cys-571, and Cys-530–Cys-546. Residues 556 to 591 form a disordered region; the sequence is DVDLTGNQESTEHGDCQDGATGSQSGPGDSAYGVRR. A helical transmembrane segment spans residues 606 to 626; the sequence is LLLACVAAAFALGASVSGLLV. Topologically, residues 627 to 931 are cytoplasmic; sequence SCACRRANRR…PAPHGGHFNF (305 aa). Disordered stretches follow at residues 655–747 and 777–931; these read LARL…GGPA and HGPQ…HFNF. Over residues 693 to 708 the composition is skewed to low complexity; it reads PPELACLPTPETTPEL. Basic and acidic residues predominate over residues 893 to 906; that stretch reads PEGHRGRSLKRVDV. A compositionally biased stretch (pro residues) spans 911-923; it reads SPKPPLASPPQPA.

The protein belongs to the semaphorin family.

Its subcellular location is the cell membrane. In terms of biological role, may be a stop signal for the dorsal root ganglion neurons in their target areas, and possibly also for other neurons. May also be involved in the maintenance and remodeling of neuronal connections. The sequence is that of Semaphorin-6C (Sema6c) from Mus musculus (Mouse).